A 132-amino-acid polypeptide reads, in one-letter code: QKPKLLYCSNGGYFLRIFPDGKVDGTRDRSDPYIQLQFYAESVGEVYIKSLETGQYLAMDSDGQLYASQSPSEECLFLERLEENNYNTYKSKVHADKDWFVGIKKNGKTKPGSRTHFGQKAILFLPLPVSSD.

Heparin-binding positions include Asn-10 and 108–120 (KTKP…FGQK).

This sequence belongs to the heparin-binding growth factors family.

The protein resides in the secreted. The protein localises to the cytoplasm. It is found in the cell cortex. It localises to the cytosol. Its subcellular location is the nucleus. In terms of biological role, plays an important role in the regulation of cell survival, cell division, angiogenesis, cell differentiation and cell migration. Functions as a potent mitogen in vitro. Acts as a ligand for FGFR1 and integrins. Binds to FGFR1 in the presence of heparin leading to FGFR1 dimerization and activation via sequential autophosphorylation on tyrosine residues which act as docking sites for interacting proteins, leading to the activation of several signaling cascades. Binds to integrins. Its binding to integrins and subsequent ternary complex formation with integrins and FGFR1 are essential for FGF1 signaling. The polypeptide is Fibroblast growth factor 1 (fgf1) (Notophthalmus viridescens (Eastern newt)).